We begin with the raw amino-acid sequence, 92 residues long: Defensin-like protein 96 (92 aa).

The signal sequence occupies residues 1–29 (MGSLRLSTVAIAVVVCLSILLISPTEVDG). Cystine bridges form between Cys-33–Cys-80, Cys-40–Cys-65, Cys-49–Cys-77, and Cys-53–Cys-79.

It belongs to the DEFL family.

The protein localises to the secreted. The protein is Defensin-like protein 96 of Arabidopsis thaliana (Mouse-ear cress).